A 1109-amino-acid chain; its full sequence is MESPLIYVMLVLLNVFVFSSGVIHNKGKERTYFSCSGEGILTGLHTIKLFLTMDNLKVRCFFRNENQSPSKEILGLFTSGGLAPNMIITNSTFYGGYYFKLTPFSNRLEWLIDIPRQNITVNTDIAAVEQWMIKITMHEGLNIYDTEGTLLDLVREPILQWNLGRVLTEMEVRDLYPEVNDIKVTKSPCANDVALIGFMMKPSSNGVFIGKTISGFWTYKECIWHDLTEIIYAELKDEHQGLTVIDLVLTNHFLVILTSLGLYVSSDLRYPTTSQIKLSRAEFCGFERVDYIRGNLWYNEKCFANRESFEVDYVTITFNRNRTLSESSSCFFSKEPFLHWLPCVFSTIKNEKSIPRVITFLIDQETDSGIYLFNVQDTKETYVTVAMLKDGKPSPRPKFPSFHFPSTFTLPLGMIFHPRSHFLYVYGSQIWVSMDGGNTFEMLCNLFSHHVTKTSNSFYTSDIVFIVEDGRILTTKAGLTTYSELGILKDAIFTLYYDQLGYIHKLTPENFDAGSKLLGHGNSGSIFGKRPDLGFEAILVPQYISTNEMYFFAHVPLTMPTNIQWKKRFKTIHLGKTIEFSKTGLANIKNVYMHKTEPVGFQTSIHTEIIVPFGIENSKDSPCLLSDLEITYSGKLYYTIKLLSKNPLHELKSTDVEKSVLIPGYSSFLIMNITDKWTASALATMPQAIKSNLKFLTGSWFLYNFGTAGGRKWSISTRQCNYWIQQDSLDFMSLNLVKYIDVGNTIDFQFKIIPKAMSTFPIPPVSMVVGNPGLVEVKTQGVFDLNENYYLDIHVSGRFFQKGSTSIALVLWEGSSKCYAITLLPTIKSSCSYLRTMHHTPGRHIPPEDWISGVHKDSQGFNMIKTLPINYRPPSHMGISIPLTDNFYHADPSKPIPRNQFHKSKETGKYKQCANVTSRAMCNCSEHQKFSHAVAFSDCKEKVHRFKFPVTQYPVVLEIFNERDKISAEPPYLVTMTEVNMRKNWQLKHNEPENVKKMKHYLEPLLKTPVYNPLGLNLTIQGSELFHFKVSVVPGVSFCELSEEFQIYVDEVPLPFPGHALIAVATSVVLGVLIFIAFVFQLRNIHPLKALKKSIRGNPGLTSSTTVSS.

Topologically, residues 1-1055 are extracellular; the sequence is MESPLIYVML…QIYVDEVPLP (1055 aa). The cysteines at positions 35 and 60 are disulfide-linked. N66, N90, and N118 each carry an N-linked (GlcNAc...) asparagine glycan. C189 and C302 form a disulfide bridge. The N-linked (GlcNAc...) asparagine glycan is linked to N321. The cysteines at positions 330 and 343 are disulfide-linked. An N-linked (GlcNAc...) asparagine glycan is attached at N672. 4 disulfides stabilise this stretch: C720–C818, C831–C1039, C913–C922, and C924–C939. N-linked (GlcNAc...) asparagine glycosylation is found at N915 and N923. N-linked (GlcNAc...) asparagine glycosylation is present at N1017. A helical transmembrane segment spans residues 1056-1078; that stretch reads FPGHALIAVATSVVLGVLIFIAF. Residues 1079 to 1109 are Cytoplasmic-facing; the sequence is VFQLRNIHPLKALKKSIRGNPGLTSSTTVSS.

Component of the CatSper complex or CatSpermasome composed of the core pore-forming members CATSPER1, CATSPER2, CATSPER3 and CATSPER4 as well as auxiliary members CATSPERB, CATSPERG2, CATSPERD, CATSPERE, CATSPERZ, C2CD6/CATSPERT, SLCO6C1, TMEM249, TMEM262 and EFCAB9. HSPA1 may be an additional auxiliary complex member. The core complex members CATSPER1, CATSPER2, CATSPER3 and CATSPER4 form a heterotetrameric channel. The auxiliary CATSPERB, CATSPERG2, CATSPERD and CATSPERE subunits form a pavilion-like structure over the pore which stabilizes the complex through interactions with CATSPER4, CATSPER3, CATSPER1 and CATSPER2 respectively. SLCO6C1 interacts with CATSPERE and TMEM262/CATSPERH interacts with CATSPERB, further stabilizing the complex. C2CD6/CATSPERT interacts at least with CATSPERD and is required for targeting the CatSper complex in the flagellar membrane. In terms of tissue distribution, testis-specific. Specifically present in the principal piece of sperm tail (at protein level). Specifically expressed in the seminiferous tubules but not in the interstitial cells. Within the tubules, it is expressed in spermatocytes and spermatids, but not in spermatogonia.

The protein resides in the cell projection. The protein localises to the cilium. Its subcellular location is the flagellum membrane. In terms of biological role, auxiliary component of the CatSper complex, a complex involved in sperm cell hyperactivation. Sperm cell hyperactivation is needed for sperm motility which is essential late in the preparation of sperm for fertilization. In Mus musculus (Mouse), this protein is Cation channel sperm-associated auxiliary subunit beta.